A 78-amino-acid polypeptide reads, in one-letter code: Acyl carrier protein (78 aa).

The Carrier domain occupies 2 to 77 (STIEESVKSI…AAIDFIKESK (76 aa)). O-(pantetheine 4'-phosphoryl)serine is present on Ser-37.

This sequence belongs to the acyl carrier protein (ACP) family. 4'-phosphopantetheine is transferred from CoA to a specific serine of apo-ACP by AcpS. This modification is essential for activity because fatty acids are bound in thioester linkage to the sulfhydryl of the prosthetic group.

The protein resides in the cytoplasm. It functions in the pathway lipid metabolism; fatty acid biosynthesis. In terms of biological role, carrier of the growing fatty acid chain in fatty acid biosynthesis. The chain is Acyl carrier protein from Wigglesworthia glossinidia brevipalpis.